The following is a 374-amino-acid chain: MVKYDAIILGSGVLGLSIASELILKGLKVAVVGKDLPEDLDSTGFASPWAGASWRSVAVNEAERRRDHYTFEQFARLAKEVPHLCEKRAYYYFWTCEDAWKEPWYKDLVFGYRMLKPEEVHAPFKYGVTYEAYTLNTPLYLLHLASTLRSAHVPIIRARLSSLDEAYSLPQLGPVDLVINATGLGARSLLGVEDPTVFPAKGQTVLVRAPVKECYGLVDPLPQPSQKAYIIPRPGPDGHVILGGCYLPNDWSTNVDPQVAEEILKQCHTLCPRLDGKGGKGTWKDIEVIAHNTGLRPVREAGLRCELEERVIGGKVRAGLATKGGKVGSGRKVSVVHAYGIGPAGYQASLGIAKELGELVDACVKKSSDNKAKL.

The N-terminal stretch at 1 to 19 (MVKYDAIILGSGVLGLSIA) is a signal peptide. Serine 11, leucine 14, lysine 34, aspartate 35, alanine 46, serine 47, and glycine 51 together coordinate FAD. Asparagine 180 carries an N-linked (GlcNAc...) asparagine glycan. An intrachain disulfide couples cysteine 214 to cysteine 271. The (R)-lactate site is built by tyrosine 229, tyrosine 246, and arginine 296. Anthranilate contacts are provided by tyrosine 229, tyrosine 246, and arginine 296. Positions 296, 342, 345, 346, and 347 each coordinate FAD. The short motif at 372 to 374 (AKL) is the Microbody targeting signal element.

Belongs to the DAMOX/DASOX family. It depends on FAD as a cofactor.

The protein resides in the peroxisome matrix. The enzyme catalyses a D-alpha-amino acid + O2 + H2O = a 2-oxocarboxylate + H2O2 + NH4(+). Functionally, catalyzes the oxidative deamination of D-amino acids with broad substrate specificity. Enables the organism to utilize D-amino acids as a source of nutrients. Enables the organism to utilize D-asparate and D-glutamate as a nitrogen source and may also contribute to utlization of D-tryptophan, D-tyrosine and D-asparagine as a nitrogen source. Protects the organism from the toxicity of D-amino acids, including from D-glutamate. May play a role in its interaction with the host. In Cryptococcus deuterogattii (strain R265) (Cryptococcus gattii VGII (strain R265)), this protein is D-amino-acid oxidase 3.